The primary structure comprises 161 residues: Large ribosomal subunit protein uL15 (161 aa).

Residues 1–42 (MKLSDIADNAGSRKKRMRVGRGIGSGKGKQSGRGGKGQTARS) form a disordered region. Positions 21–37 (RGIGSGKGKQSGRGGKG) are enriched in gly residues.

The protein belongs to the universal ribosomal protein uL15 family. Part of the 50S ribosomal subunit.

Binds to the 23S rRNA. This Bradyrhizobium diazoefficiens (strain JCM 10833 / BCRC 13528 / IAM 13628 / NBRC 14792 / USDA 110) protein is Large ribosomal subunit protein uL15.